We begin with the raw amino-acid sequence, 344 residues long: Probable nicotinate-nucleotide adenylyltransferase/Ap4A hydrolase (344 aa).

The segment at 1–182 is naMN adenylyltransferase; the sequence is MIFGGAFDPL…YIHQHNIYLK (182 aa). Residues 191-344 form an ap4A hydrolase region; sequence EPRMQHCLRV…LKYVRSLQKN (154 aa). The HD domain maps to 193–304; it reads RMQHCLRVGQ…IYLADKLEPM (112 aa). His-196 is an ADP binding site. Fe cation is bound by residues His-196, His-225, and Asp-226. Residues 226 to 229, His-255, 281 to 282, Asp-299, and Arg-305 contribute to the ADP site; these read DLAK and HT. Asp-299 contributes to the Fe cation binding site.

The protein in the N-terminal section; belongs to the NadD family. This sequence in the C-terminal section; belongs to the Ap4A hydrolase YqeK family.

It catalyses the reaction nicotinate beta-D-ribonucleotide + ATP + H(+) = deamido-NAD(+) + diphosphate. The enzyme catalyses P(1),P(4)-bis(5'-adenosyl) tetraphosphate + H2O = 2 ADP + 2 H(+). It functions in the pathway cofactor biosynthesis; NAD(+) biosynthesis; deamido-NAD(+) from nicotinate D-ribonucleotide: step 1/1. Functionally, catalyzes the reversible adenylation of nicotinate mononucleotide (NaMN) to nicotinic acid adenine dinucleotide (NaAD). Hydrolyzes diadenosine 5',5'''-P1,P4-tetraphosphate (Ap4A) to yield ADP. In Mycoplasma pneumoniae (strain ATCC 29342 / M129 / Subtype 1) (Mycoplasmoides pneumoniae), this protein is Probable nicotinate-nucleotide adenylyltransferase/Ap4A hydrolase.